Here is a 776-residue protein sequence, read N- to C-terminus: Cilium assembly protein DZIP1L (776 aa).

The C2H2-type zinc-finger motif lies at 166 to 189 (HTCHLCDKTFMNATFLRGHIQRRH). Residues 196 to 450 (GKQKQEQQLG…RKVLAALRNN (255 aa)) are a coiled coil. Serine 425 and serine 426 each carry phosphoserine. The interval 520–776 (SRAKKRWEGT…SGSRPRIPGW (257 aa)) is disordered. Residues 600-618 (GPSSTPVSPGPGLSTPPFS) are compositionally biased toward low complexity. A compositionally biased stretch (polar residues) spans 652-683 (WSDSETSEESAQSPGKGSDGLASSATLVQSMV). The span at 685–694 (NLEKQLETPA) shows a compositional bias: basic and acidic residues. A compositionally biased stretch (polar residues) spans 709–721 (TALQRSSTPARKT).

The protein belongs to the DZIP C2H2-type zinc-finger protein family. In terms of assembly, interacts with SEPTIN2.

Its subcellular location is the cytoplasm. It is found in the cytoskeleton. The protein localises to the cilium basal body. The protein resides in the microtubule organizing center. It localises to the centrosome. Its subcellular location is the centriole. In terms of biological role, involved in primary cilium formation. Probably acts as a transition zone protein required for localization of PKD1/PC1 and PKD2/PC2 to the ciliary membrane. This Rattus norvegicus (Rat) protein is Cilium assembly protein DZIP1L.